Consider the following 137-residue polypeptide: KPAEKKPAEKTPVAEKAPAEKKPKAGKKLPKDAAAGDKKKKRSKKAVETYKIYIFKVLKQVHPDIGISSKAMGIMNSFINDIFEKLAQEASRLARYNKKPTITSREIQTAVRLVLPGELAKHAVSEGTKAVTKFTSS.

Residues 1–37 show a composition bias toward basic and acidic residues; the sequence is KPAEKKPAEKTPVAEKAPAEKKPKAGKKLPKDAAAGD. Positions 1–45 are disordered; the sequence is KPAEKKPAEKTPVAEKAPAEKKPKAGKKLPKDAAAGDKKKKRSKK. N6-acetyllysine occurs at positions 27 and 28. A Glycyl lysine isopeptide (Lys-Gly) (interchain with G-Cter in ubiquitin) cross-link involves residue Lys133.

This sequence belongs to the histone H2B family. As to quaternary structure, the nucleosome is a histone octamer containing two molecules each of H2A, H2B, H3 and H4 assembled in one H3-H4 heterotetramer and two H2A-H2B heterodimers. The octamer wraps approximately 147 bp of DNA. Post-translationally, can be acetylated to formH2BK33ac and H2BK34ac. In terms of processing, monoubiquitinated to form H2BK143ub1; may give a specific tag for epigenetic transcriptional activation. Ubiquitous. Highest level in shoots, fruits and young flower buds, including petals, anthers and ovules.

The protein resides in the nucleus. The protein localises to the chromosome. Its function is as follows. Core component of nucleosome. Nucleosomes wrap and compact DNA into chromatin, limiting DNA accessibility to the cellular machineries which require DNA as a template. Histones thereby play a central role in transcription regulation, DNA repair, DNA replication and chromosomal stability. DNA accessibility is regulated via a complex set of post-translational modifications of histones, also called histone code, and nucleosome remodeling. This chain is Histone H2B.3 (H2B-3), found in Solanum lycopersicum (Tomato).